Here is a 231-residue protein sequence, read N- to C-terminus: uncharacterized protein (231 aa).

10 to 34 (VVTGAGSGIGEAIATLLHEEGAKVV) lines the NADP(+) pocket. A substrate-binding site is contributed by serine 140. Tyrosine 153 (proton acceptor) is an active-site residue.

It belongs to the short-chain dehydrogenases/reductases (SDR) family.

This is an uncharacterized protein from Staphylococcus aureus (strain MRSA252).